We begin with the raw amino-acid sequence, 276 residues long: Apulose-4-phosphate transketolase subunit A (276 aa).

This sequence belongs to the transketolase family. In terms of assembly, probable heterodimer composed of AptA and AptB. The cofactor is thiamine diphosphate.

It catalyses the reaction apulose 4-phosphate + D-glyceraldehyde 3-phosphate = D-xylulose 5-phosphate + dihydroxyacetone phosphate. It participates in carbohydrate metabolism. Involved in catabolism of D-apiose. Catalyzes the transfer of the glycolaldehyde group from apulose-4-phosphate to D-glyceraldehyde 3-phosphate, generating dihydroxyacetone phosphate and D-xylulose-5-phosphate. The sequence is that of Apulose-4-phosphate transketolase subunit A from Actinobacillus succinogenes (strain ATCC 55618 / DSM 22257 / CCUG 43843 / 130Z).